We begin with the raw amino-acid sequence, 239 residues long: Lactate utilization protein A (239 aa).

It belongs to the LutA/YkgE family.

Functionally, is involved in L-lactate degradation and allows cells to grow with lactate as the sole carbon source. In Geobacillus kaustophilus (strain HTA426), this protein is Lactate utilization protein A.